Reading from the N-terminus, the 813-residue chain is Glycerol-3-phosphate acyltransferase (813 aa).

Positions 304-309 match the HXXXXD motif motif; sequence CHRSHI.

It belongs to the GPAT/DAPAT family.

The protein resides in the cell inner membrane. It carries out the reaction sn-glycerol 3-phosphate + an acyl-CoA = a 1-acyl-sn-glycero-3-phosphate + CoA. The protein operates within phospholipid metabolism; CDP-diacylglycerol biosynthesis; CDP-diacylglycerol from sn-glycerol 3-phosphate: step 1/3. This Actinobacillus succinogenes (strain ATCC 55618 / DSM 22257 / CCUG 43843 / 130Z) protein is Glycerol-3-phosphate acyltransferase.